The primary structure comprises 443 residues: Xaa-Pro dipeptidase (443 aa).

Mn(2+) contacts are provided by D246, D257, H339, E384, and E423.

This sequence belongs to the peptidase M24B family. Bacterial-type prolidase subfamily. Mn(2+) is required as a cofactor.

The enzyme catalyses Xaa-L-Pro dipeptide + H2O = an L-alpha-amino acid + L-proline. Splits dipeptides with a prolyl residue in the C-terminal position. The polypeptide is Xaa-Pro dipeptidase (Klebsiella pneumoniae subsp. pneumoniae (strain ATCC 700721 / MGH 78578)).